Consider the following 357-residue polypeptide: Transcription factor HHO1 (357 aa).

Disordered regions lie at residues 94–117 (TSIEEEVDDKDDDDEEHQSHETDI) and 171–198 (NNNIKSPVTTSDGGSGGGGGRRGQRKNR). Positions 96–109 (IEEEVDDKDDDDEE) are enriched in acidic residues. Residues 171 to 182 (NNNIKSPVTTSD) show a composition bias toward polar residues. The 61-residue stretch at 193 to 253 (GQRKNRRCWS…HLQKYRLHAR (61 aa)) folds into the HTH myb-type domain. A DNA-binding region (H-T-H motif) is located at residues 224–249 (PKQIRDIMKVDGLTNDEVKSHLQKYR).

It is found in the nucleus. Functionally, probable factor involved in nitrate and phosphate signaling in roots. Integrates nitrate and phosphate starvation responses and adaptation of root architecture, depending on nutrient availabilities. Acts downstream of the nitrate sensor and transporter NPF6.3/NRT1.1. Represses primary root development in response to phosphate deficiency conditions, only when nitrate is present. This is Transcription factor HHO1 from Arabidopsis thaliana (Mouse-ear cress).